The chain runs to 314 residues: DNA-directed RNA polymerase subunit alpha (314 aa).

The tract at residues M1 to N227 is alpha N-terminal domain (alpha-NTD). Residues E239–T314 form an alpha C-terminal domain (alpha-CTD) region.

It belongs to the RNA polymerase alpha chain family. In plastids the minimal PEP RNA polymerase catalytic core is composed of four subunits: alpha, beta, beta', and beta''. When a (nuclear-encoded) sigma factor is associated with the core the holoenzyme is formed, which can initiate transcription.

Its subcellular location is the plastid. The protein resides in the chloroplast. It carries out the reaction RNA(n) + a ribonucleoside 5'-triphosphate = RNA(n+1) + diphosphate. DNA-dependent RNA polymerase catalyzes the transcription of DNA into RNA using the four ribonucleoside triphosphates as substrates. This Gracilaria tenuistipitata var. liui (Red alga) protein is DNA-directed RNA polymerase subunit alpha.